Reading from the N-terminus, the 404-residue chain is Probable tRNA sulfurtransferase (404 aa).

One can recognise a THUMP domain in the interval 60–165 (QPIVEALKLV…DEAAYISYEE (106 aa)). Residues 183–184 (ML), 208–209 (HF), Arg-265, Gly-287, and Gln-296 each bind ATP.

The protein belongs to the ThiI family.

It localises to the cytoplasm. It carries out the reaction [ThiI sulfur-carrier protein]-S-sulfanyl-L-cysteine + a uridine in tRNA + 2 reduced [2Fe-2S]-[ferredoxin] + ATP + H(+) = [ThiI sulfur-carrier protein]-L-cysteine + a 4-thiouridine in tRNA + 2 oxidized [2Fe-2S]-[ferredoxin] + AMP + diphosphate. The catalysed reaction is [ThiS sulfur-carrier protein]-C-terminal Gly-Gly-AMP + S-sulfanyl-L-cysteinyl-[cysteine desulfurase] + AH2 = [ThiS sulfur-carrier protein]-C-terminal-Gly-aminoethanethioate + L-cysteinyl-[cysteine desulfurase] + A + AMP + 2 H(+). It functions in the pathway cofactor biosynthesis; thiamine diphosphate biosynthesis. Functionally, catalyzes the ATP-dependent transfer of a sulfur to tRNA to produce 4-thiouridine in position 8 of tRNAs, which functions as a near-UV photosensor. Also catalyzes the transfer of sulfur to the sulfur carrier protein ThiS, forming ThiS-thiocarboxylate. This is a step in the synthesis of thiazole, in the thiamine biosynthesis pathway. The sulfur is donated as persulfide by IscS. This chain is Probable tRNA sulfurtransferase, found in Streptococcus pyogenes serotype M4 (strain MGAS10750).